The sequence spans 107 residues: Small ribosomal subunit protein bS18 (107 aa).

The protein belongs to the bacterial ribosomal protein bS18 family. In terms of assembly, part of the 30S ribosomal subunit. Forms a tight heterodimer with protein bS6.

Its function is as follows. Binds as a heterodimer with protein bS6 to the central domain of the 16S rRNA, where it helps stabilize the platform of the 30S subunit. This Mycoplasmopsis agalactiae (strain NCTC 10123 / CIP 59.7 / PG2) (Mycoplasma agalactiae) protein is Small ribosomal subunit protein bS18.